The chain runs to 336 residues: Protein-glutamate methylesterase/protein-glutamine glutaminase 1 (336 aa).

The Response regulatory domain maps to 2 to 119; that stretch reads KIAIVNDMPM…GNAQEAAAPL (118 aa). At Asp-53 the chain carries 4-aspartylphosphate. The region spanning 143–336 is the CheB-type methylesterase domain; it reads PLRSGAPRQS…APRLLEIFAK (194 aa). Catalysis depends on residues Ser-159, His-186, and Asp-279.

Belongs to the CheB family. In terms of processing, phosphorylated by CheA. Phosphorylation of the N-terminal regulatory domain activates the methylesterase activity.

It localises to the cytoplasm. It carries out the reaction [protein]-L-glutamate 5-O-methyl ester + H2O = L-glutamyl-[protein] + methanol + H(+). The catalysed reaction is L-glutaminyl-[protein] + H2O = L-glutamyl-[protein] + NH4(+). Involved in chemotaxis. Part of a chemotaxis signal transduction system that modulates chemotaxis in response to various stimuli. Catalyzes the demethylation of specific methylglutamate residues introduced into the chemoreceptors (methyl-accepting chemotaxis proteins or MCP) by CheR. Also mediates the irreversible deamidation of specific glutamine residues to glutamic acid. The sequence is that of Protein-glutamate methylesterase/protein-glutamine glutaminase 1 from Pseudomonas fluorescens (strain ATCC BAA-477 / NRRL B-23932 / Pf-5).